A 271-amino-acid polypeptide reads, in one-letter code: ATP synthase subunit a (271 aa).

The next 5 helical transmembrane spans lie at 38 to 58, 100 to 120, 146 to 166, 220 to 240, and 242 to 262; these read FWTL…LFLL, LIAP…LMDL, DVNI…FYSI, LIFI…LNVP, and AIFH…LTIV.

This sequence belongs to the ATPase A chain family. As to quaternary structure, F-type ATPases have 2 components, CF(1) - the catalytic core - and CF(0) - the membrane proton channel. CF(1) has five subunits: alpha(3), beta(3), gamma(1), delta(1), epsilon(1). CF(0) has three main subunits: a(1), b(2) and c(9-12). The alpha and beta chains form an alternating ring which encloses part of the gamma chain. CF(1) is attached to CF(0) by a central stalk formed by the gamma and epsilon chains, while a peripheral stalk is formed by the delta and b chains.

It localises to the cell inner membrane. Functionally, key component of the proton channel; it plays a direct role in the translocation of protons across the membrane. The polypeptide is ATP synthase subunit a (Citrobacter koseri (strain ATCC BAA-895 / CDC 4225-83 / SGSC4696)).